Reading from the N-terminus, the 23-residue chain is Endochitinase B (23 aa).

Belongs to the glycosyl hydrolase 19 family. Chitinase class I subfamily.

It carries out the reaction Random endo-hydrolysis of N-acetyl-beta-D-glucosaminide (1-&gt;4)-beta-linkages in chitin and chitodextrins.. Its function is as follows. Defense against chitin-containing fungal pathogens. The polypeptide is Endochitinase B (Pisum sativum (Garden pea)).